The primary structure comprises 174 residues: NADH-quinone oxidoreductase subunit B 1 (174 aa).

[4Fe-4S] cluster is bound by residues C38, C39, C104, and C133.

Belongs to the complex I 20 kDa subunit family. In terms of assembly, NDH-1 is composed of 14 different subunits. Subunits NuoB, C, D, E, F, and G constitute the peripheral sector of the complex. The cofactor is [4Fe-4S] cluster.

The protein resides in the cell membrane. The enzyme catalyses a quinone + NADH + 5 H(+)(in) = a quinol + NAD(+) + 4 H(+)(out). Its function is as follows. NDH-1 shuttles electrons from NADH, via FMN and iron-sulfur (Fe-S) centers, to quinones in the respiratory chain. The immediate electron acceptor for the enzyme in this species is believed to be ubiquinone. Couples the redox reaction to proton translocation (for every two electrons transferred, four hydrogen ions are translocated across the cytoplasmic membrane), and thus conserves the redox energy in a proton gradient. The chain is NADH-quinone oxidoreductase subunit B 1 from Chloroflexus aggregans (strain MD-66 / DSM 9485).